The sequence spans 146 residues: BCL7-like protein (146 aa).

The interval 59–146 (MAPPKIKEVK…RDAEMTSKQP (88 aa)) is disordered. Polar residues-rich tracts occupy residues 75–90 (NQVP…TSVT) and 113–134 (DSNQ…TDFS). The segment covering 135–146 (SMRDAEMTSKQP) has biased composition (basic and acidic residues).

The protein belongs to the BCL7 family. In terms of tissue distribution, ubiquitous.

Its subcellular location is the nucleus. Required for the terminal differentiation of seam cells, and the differentiation of distal tip cells important for normal somatic gonad and germ cell development. Plays a role in the Wnt signaling pathway, regulating the expression of beta-catenin homologs wrm-1, bar-1 and sys-1, and the localization of wrm-1 and the wnt signaling pathway component pop-1 during asymmetric cell division of seam cells and the Z-cell lineage of the somatic gonad, respectively. May have a pro-apoptotic role, possibly linked to the negative regulation of expression of anti-apoptotic factor ced-9. The sequence is that of BCL7-like protein from Caenorhabditis elegans.